The primary structure comprises 334 residues: Amino acid--[acyl-carrier-protein] ligase 2 (334 aa).

Cys-131 is a Zn(2+) binding site. ATP-binding positions include Arg-159, Glu-161, and 168–169 (RL). Position 176 (Glu-176) interacts with Zn(2+). An an L-alpha-amino acid-binding site is contributed by Glu-176. ATP contacts are provided by residues Lys-235 and 250-253 (ACMS). Residue Cys-279 participates in Zn(2+) binding. Residue Arg-286 coordinates ATP.

The protein belongs to the class-II aminoacyl-tRNA synthetase family. Amino acid--[acyl-carrier-protein] ligase subfamily. Homodimer. The cofactor is Zn(2+).

The catalysed reaction is an L-alpha-amino acid + holo-[ACP] + ATP = an L-alpha-aminoacyl-[ACP] + AMP + diphosphate. Functionally, catalyzes the ATP-dependent activation of L-glycine and its transfer to the phosphopantetheine prosthetic group covalently attached to the vicinal carrier protein blr6284 of yet unknown function. May participate in nonribosomal peptide synthesis or related processes. L-alanine is a poor substrate whereas L-serine or D-amino acids are not substrates for ATP-dependent activation. Does not display tRNA aminoacylation activity. The polypeptide is Amino acid--[acyl-carrier-protein] ligase 2 (Bradyrhizobium diazoefficiens (strain JCM 10833 / BCRC 13528 / IAM 13628 / NBRC 14792 / USDA 110)).